Here is a 133-residue protein sequence, read N- to C-terminus: Ribosome-binding factor A (133 aa).

Belongs to the RbfA family. In terms of assembly, monomer. Binds 30S ribosomal subunits, but not 50S ribosomal subunits or 70S ribosomes.

The protein resides in the cytoplasm. Its function is as follows. One of several proteins that assist in the late maturation steps of the functional core of the 30S ribosomal subunit. Associates with free 30S ribosomal subunits (but not with 30S subunits that are part of 70S ribosomes or polysomes). Required for efficient processing of 16S rRNA. May interact with the 5'-terminal helix region of 16S rRNA. This is Ribosome-binding factor A from Proteus mirabilis (strain HI4320).